The chain runs to 86 residues: Cell division topological specificity factor (86 aa).

This sequence belongs to the MinE family.

In terms of biological role, prevents the cell division inhibition by proteins MinC and MinD at internal division sites while permitting inhibition at polar sites. This ensures cell division at the proper site by restricting the formation of a division septum at the midpoint of the long axis of the cell. This is Cell division topological specificity factor from Shewanella frigidimarina (strain NCIMB 400).